A 254-amino-acid chain; its full sequence is Sugar fermentation stimulation protein homolog (254 aa).

Belongs to the SfsA family.

This is Sugar fermentation stimulation protein homolog from Synechococcus sp. (strain CC9605).